The chain runs to 508 residues: Octopamine receptor beta-1R (508 aa).

Topologically, residues 1–111 (MTLLQRLQAM…SHLALVFVKC (111 aa)) are extracellular. The chain crosses the membrane as a helical span at residues 112-132 (FIIGFIILAAILGNMLVIVSV). At 133–139 (MRHRKLR) the chain is on the cytoplasmic side. The chain crosses the membrane as a helical span at residues 140 to 160 (IITNYFVVSLAVADMLVALCA). The Extracellular segment spans residues 161 to 186 (MTFNASVMISGKWMFGSVMCDMWNSF). A glycan (N-linked (GlcNAc...) asparagine) is linked at Asn164. The helical transmembrane segment at 187-209 (DVYFSTASIMHLCCISVDRYYAI) threads the bilayer. Topologically, residues 210 to 223 (VQPLDYPLIMTQRR) are cytoplasmic. A helical membrane pass occupies residues 224-244 (VFIMLLMVWLSPALLSFLPIC). Topologically, residues 245-270 (SGWYTTTENYKYLKSNPHICEFKVNK) are extracellular. A helical transmembrane segment spans residues 271 to 291 (AYAIVSSSMSFWIPGIVMLSM). Residues 292-351 (YYRIYQEADRQERLVYRSKVAALLLEKHLQISQIPKPRPSIQVEQSTISTMRRERKAART) lie on the Cytoplasmic side of the membrane. Residues 352–372 (LGIIMSAFLICWLPFFLWYIV) traverse the membrane as a helical segment. Residues 373 to 383 (SSLCDSCITPR) lie on the Extracellular side of the membrane. Residues 384-404 (LLVGILFWIGYFNSALNPIIY) traverse the membrane as a helical segment. Over 405–508 (AYFNRDFRAA…MQQLHPLYTN (104 aa)) the chain is Cytoplasmic. The interval 440–464 (RDLEFGGPSRRGTNGAQRTGSGSAE) is disordered. Residues 450 to 461 (RGTNGAQRTGSG) are compositionally biased toward polar residues.

This sequence belongs to the G-protein coupled receptor 1 family. In the adult, expressed in the superior protocerebrum and the optic lobe medulla of the central nervous system, nurse cells of egg chambers in the ovary at oogenic stages 1-10, and spermatogonia and spermatocytes in the testis. Expressed in embryonic and larval ventral nerve cord and brain lobe, and the larval imaginal disk and larval salivary gland. Also expressed in larval synaptic boutons and retinal cells in the optic disk.

It localises to the cell membrane. Its function is as follows. Autoreceptor for octopamine, which is a neurotransmitter, neurohormone, and neuromodulator in invertebrates. Negatively regulates synaptic growth by activating the inhibitory G protein Galphao and limiting cAMP production. Antagonizes the action of Octbeta2R which stimulates synaptic growth. The protein is Octopamine receptor beta-1R of Drosophila melanogaster (Fruit fly).